The primary structure comprises 238 residues: Uridylate kinase (238 aa).

12-15 (KLSG) is a binding site for ATP. G54 is a binding site for UMP. 2 residues coordinate ATP: G55 and R59. UMP-binding positions include D74 and 135-142 (TGNPFFTT). ATP is bound by residues T162, Y168, and D171.

This sequence belongs to the UMP kinase family. Homohexamer.

The protein resides in the cytoplasm. The enzyme catalyses UMP + ATP = UDP + ADP. Its pathway is pyrimidine metabolism; CTP biosynthesis via de novo pathway; UDP from UMP (UMPK route): step 1/1. With respect to regulation, inhibited by UTP. Functionally, catalyzes the reversible phosphorylation of UMP to UDP. The chain is Uridylate kinase from Methylobacillus flagellatus (strain ATCC 51484 / DSM 6875 / VKM B-1610 / KT).